The chain runs to 272 residues: Secretagogin (272 aa).

6 consecutive EF-hand domains span residues 8-43 (LDAAGFLQIWQHFDADDNGYIEGKELDDFFRHMLKK), 53-89 (ERVQQIKKSFMSAYDATFDGRLQIEELANMILPQEEN), 101-136 (DNSVEFMKIWRKYDADSSGYISAAELKNFLKDLFLQ), 145-180 (KLDEYTDAMMKIFDKNKDGRLDLNDLARILALQENF), 193-228 (ERKRDFEKIFAHYDVSRTGALEGPEVDGFVKDMMEL), and 237-272 (DLDKFRECLLTHCDMNKDGKIQKSELALCLGLKHKP). Ca(2+)-binding residues include aspartate 21, aspartate 23, asparagine 25, tyrosine 27, and glutamate 32. Ca(2+) is bound by residues aspartate 114, aspartate 116, serine 118, tyrosine 120, glutamate 125, aspartate 158, asparagine 160, aspartate 162, arginine 164, aspartate 169, aspartate 206, serine 208, threonine 210, glutamate 217, aspartate 250, asparagine 252, aspartate 254, lysine 256, and glutamate 261.

The protein localises to the cytoplasm. The protein is Secretagogin (scgn) of Danio rerio (Zebrafish).